Reading from the N-terminus, the 572-residue chain is Proline--tRNA ligase (572 aa).

This sequence belongs to the class-II aminoacyl-tRNA synthetase family. ProS type 1 subfamily. Homodimer.

The protein resides in the cytoplasm. The catalysed reaction is tRNA(Pro) + L-proline + ATP = L-prolyl-tRNA(Pro) + AMP + diphosphate. Catalyzes the attachment of proline to tRNA(Pro) in a two-step reaction: proline is first activated by ATP to form Pro-AMP and then transferred to the acceptor end of tRNA(Pro). As ProRS can inadvertently accommodate and process non-cognate amino acids such as alanine and cysteine, to avoid such errors it has two additional distinct editing activities against alanine. One activity is designated as 'pretransfer' editing and involves the tRNA(Pro)-independent hydrolysis of activated Ala-AMP. The other activity is designated 'posttransfer' editing and involves deacylation of mischarged Ala-tRNA(Pro). The misacylated Cys-tRNA(Pro) is not edited by ProRS. The polypeptide is Proline--tRNA ligase (Escherichia coli O139:H28 (strain E24377A / ETEC)).